Here is a 58-residue protein sequence, read N- to C-terminus: Photosystem II reaction center protein K (58 aa).

Positions 1 to 21 (MFNAYLDTVLDLSANGTVILA) are excised as a propeptide. The chain crosses the membrane as a helical span at residues 29 to 49 (IFDPIVDVMPIIPVFFLLLAF).

This sequence belongs to the PsbK family. As to quaternary structure, PSII is composed of 1 copy each of membrane proteins PsbA, PsbB, PsbC, PsbD, PsbE, PsbF, PsbH, PsbI, PsbJ, PsbK, PsbL, PsbM, PsbT, PsbX, PsbY, PsbZ, Psb30/Ycf12, at least 3 peripheral proteins of the oxygen-evolving complex and a large number of cofactors. It forms dimeric complexes.

It is found in the plastid. It localises to the chloroplast thylakoid membrane. In terms of biological role, one of the components of the core complex of photosystem II (PSII). PSII is a light-driven water:plastoquinone oxidoreductase that uses light energy to abstract electrons from H(2)O, generating O(2) and a proton gradient subsequently used for ATP formation. It consists of a core antenna complex that captures photons, and an electron transfer chain that converts photonic excitation into a charge separation. This chain is Photosystem II reaction center protein K, found in Staurastrum punctulatum (Green alga).